The chain runs to 207 residues: MLECENLSCTRNNKVLFKNLSFKAELKSKILITGPNGSGKTSLIRSLSGLLPPVSGNIRHCGKDIYDDPKSYISSMVYIGHKNACKDSLTVAQNVEFWAGIRNTRELIVAAICCLQLQPVLNIRYGELSAGWKRRVALARLLISNANVWLIDEPFCNLDSATCELVLNLISIRSEQNGIVIITGHSSTEQLCDFTTIDIRNFNRLLV.

The region spanning 2 to 204 is the ABC transporter domain; the sequence is LECENLSCTR…TTIDIRNFNR (203 aa). 34–41 is an ATP binding site; that stretch reads GPNGSGKT.

It belongs to the ABC transporter superfamily. CcmA exporter (TC 3.A.1.107) family. As to quaternary structure, the complex is composed of two ATP-binding proteins (CcmA) and two transmembrane proteins (CcmB).

Its subcellular location is the cell membrane. The enzyme catalyses heme b(in) + ATP + H2O = heme b(out) + ADP + phosphate + H(+). Its function is as follows. Part of the ABC transporter complex CcmAB involved in the biogenesis of c-type cytochromes; once thought to export heme, this seems not to be the case, but its exact role is uncertain. Responsible for energy coupling to the transport system. This Wolbachia pipientis wMel protein is Cytochrome c biogenesis ATP-binding export protein CcmA.